Reading from the N-terminus, the 308-residue chain is Cobalamin biosynthesis protein CobD (308 aa).

The next 6 helical transmembrane spans lie at 1 to 21 (MEILLIFLLALVIDMVFGDPP), 50 to 70 (FVYGIVMVIFTMALFFVPVYF), 71 to 91 (LLDWLQGINSIVYIIVSAILF), 151 to 171 (IGDGFVAPLFFFLIFGVPGVM), 202 to 222 (VLNFIPARLSALCILVASFFG), and 284 to 304 (LVLINNAGCIWVLISVGVIYF).

Belongs to the CobD/CbiB family.

The protein localises to the cell membrane. It participates in cofactor biosynthesis; adenosylcobalamin biosynthesis. Its function is as follows. Converts cobyric acid to cobinamide by the addition of aminopropanol on the F carboxylic group. The protein is Cobalamin biosynthesis protein CobD of Dehalococcoides mccartyi (strain CBDB1).